Consider the following 348-residue polypeptide: D-lactate dehydrogenase kk1H (348 aa).

Residues 158–159 (RI), aspartate 178, 208–209 (CP), 235–237 (TSR), and aspartate 261 contribute to the NAD(+) site. The active site involves arginine 237. Glutamate 266 is a catalytic residue. Histidine 298 acts as the Proton donor in catalysis.

This sequence belongs to the D-isomer specific 2-hydroxyacid dehydrogenase family.

The protein operates within secondary metabolite biosynthesis. D-lactate dehydrogenase; part of the gene cluster that mediates the biosynthesis of KK-1, a novel cyclic depsipeptide with 10 residues which is a promising active compound with high activity against many plant pathogens, especially Botrytis cinerea. Within the pathway, kk1H catalyzes in the synthesis of D-lactic acid from pyruvic acid, which is recognized by the A domain of the first kk1B module. The nonribosomal peptide synthetase (NRPS) kk1B catalyzes the elongation and cyclization of the decapeptide chain composed of 1 D-lactic acid residue (D-Lac), 1 pipecolic acid residue (Pip), 1 aspartic acid residue (Asp), 1 isoleucine residue (Ile), 1 glycine residue (Gly), 1 tyrosine residue (Tyr) and 4 valine residues (Val). The Asp, Ile and 3 Val residues are N-methylated by the 5 methyltransferase domains from the NRPS (found in modules 3, 5, 6, 7 and 9), whereas the Tyr residue is O-methylated by the cluster encoded O-methyltransferase kk1A. The thioesterase kk1J is likely to be involved in the corrective mechanism of peptide chain synthesis. The D-lactate dehydrogenase kk1H is involved in the synthesis of D-lactic acid from pyruvic acid, which is recognized by the A domain of the first kk1B module. The pyrroline-5-carboxylate reductase kk1I is involved in the synthesis of the L-pipecolic acid residue of KK-1 from delta-1-pyrroline-5-carboxylate (P5C), a metabolic intermediate of lysine. It still is unclear how kk1C and kk1D are involved in the production of KK-1. The sequence is that of D-lactate dehydrogenase kk1H from Curvularia clavata.